Reading from the N-terminus, the 285-residue chain is Putative lipoprotein SCO4650 (285 aa).

The N-terminal stretch at Met1–Ala20 is a signal peptide. Cys21 is lipidated: N-palmitoyl cysteine. Cys21 carries the S-diacylglycerol cysteine lipid modification. Residues Gly27–Ser63 form a disordered region. A compositionally biased stretch (low complexity) spans Ser43–Ala58.

It is found in the cell membrane. This is Putative lipoprotein SCO4650 from Streptomyces coelicolor (strain ATCC BAA-471 / A3(2) / M145).